The chain runs to 557 residues: Dihydroxy-acid dehydratase (557 aa).

Cys-50 lines the [2Fe-2S] cluster pocket. Mg(2+) is bound at residue Asp-82. Cys-123 is a [2Fe-2S] cluster binding site. Mg(2+) is bound by residues Asp-124 and Lys-125. Lys-125 is modified (N6-carboxylysine). Cys-195 is a [2Fe-2S] cluster binding site. Glu-447 is a Mg(2+) binding site. Ser-473 acts as the Proton acceptor in catalysis.

This sequence belongs to the IlvD/Edd family. As to quaternary structure, homodimer. It depends on [2Fe-2S] cluster as a cofactor. The cofactor is Mg(2+).

The catalysed reaction is (2R)-2,3-dihydroxy-3-methylbutanoate = 3-methyl-2-oxobutanoate + H2O. It catalyses the reaction (2R,3R)-2,3-dihydroxy-3-methylpentanoate = (S)-3-methyl-2-oxopentanoate + H2O. The protein operates within amino-acid biosynthesis; L-isoleucine biosynthesis; L-isoleucine from 2-oxobutanoate: step 3/4. It participates in amino-acid biosynthesis; L-valine biosynthesis; L-valine from pyruvate: step 3/4. Functions in the biosynthesis of branched-chain amino acids. Catalyzes the dehydration of (2R,3R)-2,3-dihydroxy-3-methylpentanoate (2,3-dihydroxy-3-methylvalerate) into 2-oxo-3-methylpentanoate (2-oxo-3-methylvalerate) and of (2R)-2,3-dihydroxy-3-methylbutanoate (2,3-dihydroxyisovalerate) into 2-oxo-3-methylbutanoate (2-oxoisovalerate), the penultimate precursor to L-isoleucine and L-valine, respectively. This is Dihydroxy-acid dehydratase from Metallosphaera sedula (strain ATCC 51363 / DSM 5348 / JCM 9185 / NBRC 15509 / TH2).